The primary structure comprises 619 residues: Xyloglucan galactosyltransferase MUR3 (619 aa).

The tract at residues 1 to 26 (MFPRVSMRRRSAEVSPTEPMEKGNGK) is disordered. The Cytoplasmic segment spans residues 1–33 (MFPRVSMRRRSAEVSPTEPMEKGNGKNQTNRIC). The chain crosses the membrane as a helical; Signal-anchor for type II membrane protein span at residues 34-54 (LLVALSLFFWALLLYFHFVVL). Residues 55-619 (GTSNIDKQLQ…WKSEQRDKTQ (565 aa)) are Lumenal-facing. Residues asparagine 116, asparagine 146, asparagine 231, asparagine 257, asparagine 319, asparagine 465, and asparagine 482 are each glycosylated (N-linked (GlcNAc...) asparagine). The interval 576–619 (HVWDPFFSKPKPGEDGSSDGNGGTTISADAAKNSWKSEQRDKTQ) is disordered. Residues 610 to 619 (WKSEQRDKTQ) are compositionally biased toward basic and acidic residues.

Belongs to the glycosyltransferase 47 family. As to quaternary structure, interacts with CSLC4 and FUT1. As to expression, ubiquitous.

It is found in the golgi apparatus. It localises to the golgi stack membrane. Its subcellular location is the golgi apparatus membrane. In terms of biological role, involved in the attachment of the Gal residue on the third xylosyl unit within the XXXG core structure of xyloglucan, the principal glycan that interlaces the cellulose microfibrils in plant cell wall. Associates with other xyloglucan-synthesizing enzymes to form multiprotein complexes for xyloglucan synthesis in the Golgi. Interacts with actin and is required for the proper endomembrane organization and for the cell elongation. Not involved in the trafficking from the endoplasmic reticulum to the vacuoles. Involved in salt stress tolerance. Participates in the control of the expression of genes encoding for proteins involved in reactive oxygen species (ROS) detoxification under salt stress. May contribute to the maintenance of the proper organization of actin microfilaments during salt stress-induced ROS production. The protein is Xyloglucan galactosyltransferase MUR3 of Arabidopsis thaliana (Mouse-ear cress).